The chain runs to 464 residues: E3 ubiquitin-protein ligase MYLIP-B (464 aa).

Positions 1–279 (MLCHITRPDS…EIHAFYRCDT (279 aa)) constitute an FERM domain. The RING-type zinc finger occupies 381–416 (CALCCEQEISAAFCPCGHMFCCYNCASQLQCCPVCR).

Interacts with anxa5.

The protein resides in the cytoplasm. It localises to the cytosol. The catalysed reaction is S-ubiquitinyl-[E2 ubiquitin-conjugating enzyme]-L-cysteine + [acceptor protein]-L-lysine = [E2 ubiquitin-conjugating enzyme]-L-cysteine + N(6)-ubiquitinyl-[acceptor protein]-L-lysine.. The protein operates within protein modification; protein ubiquitination. Functionally, E3 ubiquitin-protein ligase that mediates ubiquitination and subsequent proteasomal degradation of myosin regulatory light chain (MRLC). Regulates cell movements during gastrulation by acting downstream of fz7 to antagonize the frizzled-signaling pathway. The chain is E3 ubiquitin-protein ligase MYLIP-B from Danio rerio (Zebrafish).